We begin with the raw amino-acid sequence, 315 residues long: Polyprenyl transferase mpaA (315 aa).

The next 8 membrane-spanning stretches (helical) occupy residues 40 to 60 (IEFI…LCGA), 84 to 103 (LASG…GQYF), 118 to 135 (IWSL…YPYL), 143 to 163 (VFVY…ITGW), 174 to 194 (GDII…CVYF), 224 to 244 (LFLA…ISTI), 248 to 268 (WLWV…IAQF), and 279 to 299 (IHWD…VEVG).

This sequence belongs to the UbiA prenyltransferase family. It depends on Mg(2+) as a cofactor.

It is found in the golgi apparatus membrane. It carries out the reaction 5,7-dihydroxy-4-methylphthalide + (2E,6E)-farnesyl diphosphate = 4-farnesyl-3,5-dihydroxy-6-methylphthalide + diphosphate. It functions in the pathway secondary metabolite biosynthesis; terpenoid biosynthesis. Its function is as follows. Polyprenyl transferase; part of the gene cluster that mediates the biosynthesis of mycophenolic acid (MPA), the first isolated antibiotic natural product in the world obtained from a culture of Penicillium brevicompactum in 1893. MpaA is a Golgi apparatus-associated enzyme that catalyzes the prenylation of 5,7-dihydroxy-4,6-dimethylphthalide (DHMP) to yield farnesyl-DHMP (FDHMP). The first step of the pathway is the synthesis of 5-methylorsellinic acid (5MOA) by the cytosolic polyketide synthase mpaC. 5MOA is then converted to the phthalide compound 5,7-dihydroxy-4,6-dimethylphthalide (DHMP) by the endoplasmic reticulum-bound cytochrome P450 monooxygenase mpaDE. MpaDE first catalyzes hydroxylation of 5-MOA to 4,6-dihydroxy-2-(hydroxymethyl)-3-methylbenzoic acid (DHMB). MpaDE then acts as a lactone synthase that catalyzes the ring closure to convert DHMB into DHMP. The next step is the prenylation of DHMP by the Golgi apparatus-associated prenyltransferase mpaA to yield farnesyl-DHMP (FDHMP). The ER-bound oxygenase mpaB then mediates the oxidative cleavage the C19-C20 double bond in FDHMP to yield FDHMP-3C via a mycophenolic aldehyde intermediate. The O-methyltransferase mpaG catalyzes the methylation of FDHMP-3C to yield MFDHMP-3C. After the cytosolic methylation of FDHMP-3C, MFDHMP-3C enters into peroxisomes probably via free diffusion due to its low molecular weight. Upon a peroxisomal CoA ligation reaction, catalyzed by a beta-oxidation component enzyme acyl-CoA ligase ACL891, MFDHMP-3C-CoA would then be restricted to peroxisomes for the following beta-oxidation pathway steps. The peroxisomal beta-oxidation machinery than converts MFDHMP-3C-CoA into MPA_CoA, via a beta-oxidation chain-shortening process. Finally mpaH acts as a peroxisomal acyl-CoA hydrolase with high substrate specificity toward MPA-CoA to release the final product MPA. This Penicillium brevicompactum protein is Polyprenyl transferase mpaA.